A 101-amino-acid polypeptide reads, in one-letter code: Small ribosomal subunit protein eS24 (101 aa).

Belongs to the eukaryotic ribosomal protein eS24 family.

This is Small ribosomal subunit protein eS24 from Methanosarcina barkeri (strain Fusaro / DSM 804).